The chain runs to 1024 residues: Nardilysin-like (1024 aa).

Residues 41-103 (PDIYPEGSVP…DEVKGKGDHQ (63 aa)) form a disordered region. Acidic residues predominate over residues 52–95 (QIDEDDEDGEEEDSDGSSEDDDDDEDDEEDGEGDEEDEDEDEDE). His-129 is a binding site for Zn(2+). The active-site Proton acceptor is Glu-132. His-133 contributes to the Zn(2+) binding site. Residue Glu-203 is part of the active site. Glu-210 contributes to the Zn(2+) binding site.

Belongs to the peptidase M16 family. Zn(2+) serves as cofactor.

The catalysed reaction is Hydrolysis of polypeptides, preferably at -Xaa-|-Arg-Lys-, and less commonly at -Arg-|-Arg-Xaa-, in which Xaa is not Arg or Lys.. In terms of biological role, cleaves peptide substrates on the N-terminus of arginine residues in dibasic pairs. The protein is Nardilysin-like of Arabidopsis thaliana (Mouse-ear cress).